The following is a 546-amino-acid chain: Chaperonin GroEL 1 (546 aa).

Residues 30 to 33 (TLGP), K51, 87 to 91 (DGTTT), G415, and D495 contribute to the ATP site. Residues 527–546 (DAAPTAAPGGPGAGGPGFDF) are disordered. Over residues 535 to 546 (GGPGAGGPGFDF) the composition is skewed to gly residues.

This sequence belongs to the chaperonin (HSP60) family. Forms a cylinder of 14 subunits composed of two heptameric rings stacked back-to-back. Interacts with the co-chaperonin GroES.

The protein resides in the cytoplasm. The enzyme catalyses ATP + H2O + a folded polypeptide = ADP + phosphate + an unfolded polypeptide.. In terms of biological role, together with its co-chaperonin GroES, plays an essential role in assisting protein folding. The GroEL-GroES system forms a nano-cage that allows encapsulation of the non-native substrate proteins and provides a physical environment optimized to promote and accelerate protein folding. The sequence is that of Chaperonin GroEL 1 from Burkholderia lata (strain ATCC 17760 / DSM 23089 / LMG 22485 / NCIMB 9086 / R18194 / 383).